The primary structure comprises 194 residues: uncharacterized protein (194 aa).

The protein to A.rhizogenes plasmid pRia4B ORF-3 in virA region.

This is an uncharacterized protein from Sinorhizobium fredii (strain NBRC 101917 / NGR234).